The primary structure comprises 268 residues: Nitrite transporter NirC (268 aa).

Residues 1 to 25 (MFTDTINKCAANAARIARLSANNPL) are Cytoplasmic-facing. A helical transmembrane segment spans residues 26–46 (GFWVSSAMAGAYVGLGIILIF). The Periplasmic portion of the chain corresponds to 47–59 (TLGNLLDPSVRPL). The chain crosses the membrane as a helical span at residues 60-80 (VMGATFGIALTLVIIAGSELF). Residues 81–112 (TGHTMFLTFGVKAGSISHGQMWAILPQTWLGN) are Cytoplasmic-facing. A helical membrane pass occupies residues 113–133 (LVGSVFVAMLYSWGGGSLLPV). Topologically, residues 134-151 (DTSIVHSVALAKTTAPAM) are periplasmic. Residues 152-172 (VLFFKGALCNWLVCLAIWMAL) traverse the membrane as a helical segment. Residues 173–179 (RTEGAAK) lie on the Cytoplasmic side of the membrane. Residues 180–200 (FIAIWWCLLAFIASGYEHSIA) traverse the membrane as a helical segment. The Periplasmic segment spans residues 201–225 (NMTLFALSWFGNHSEAYTLAGIGHN). The helical transmembrane segment at 226-246 (LLWVTLGNTLSGAVFMGLGYW) threads the bilayer. Over 247-268 (YATPKANRPVADKFNQTETAAG) the chain is Cytoplasmic.

It belongs to the FNT transporter (TC 1.A.16) family.

It is found in the cell inner membrane. Its function is as follows. Catalyzes nitrite uptake and nitrite export across the cytoplasmic membrane. Is up to 10-fold more active than NarK or NarU in nitrite uptake for subsequent reduction in the cytoplasm by the NirB/NirD nitrite reductase. The sequence is that of Nitrite transporter NirC (nirC) from Escherichia coli (strain K12).